The sequence spans 295 residues: 4-hydroxy-tetrahydrodipicolinate synthase (295 aa).

Position 47 (Thr47) interacts with pyruvate. Catalysis depends on Tyr135, which acts as the Proton donor/acceptor. Catalysis depends on Lys163, which acts as the Schiff-base intermediate with substrate. Pyruvate is bound at residue Ile206.

Belongs to the DapA family. As to quaternary structure, homodimer.

It localises to the cytoplasm. It catalyses the reaction L-aspartate 4-semialdehyde + pyruvate = (2S,4S)-4-hydroxy-2,3,4,5-tetrahydrodipicolinate + H2O + H(+). It participates in amino-acid biosynthesis; L-lysine biosynthesis via DAP pathway; (S)-tetrahydrodipicolinate from L-aspartate: step 3/4. Its function is as follows. Catalyzes the condensation of (S)-aspartate-beta-semialdehyde [(S)-ASA] and pyruvate to 4-hydroxy-tetrahydrodipicolinate (HTPA). The polypeptide is 4-hydroxy-tetrahydrodipicolinate synthase (Staphylococcus aureus (strain MSSA476)).